Reading from the N-terminus, the 303-residue chain is Methionyl-tRNA formyltransferase (303 aa).

109-112 (SLLP) is a (6S)-5,6,7,8-tetrahydrofolate binding site.

This sequence belongs to the Fmt family.

The catalysed reaction is L-methionyl-tRNA(fMet) + (6R)-10-formyltetrahydrofolate = N-formyl-L-methionyl-tRNA(fMet) + (6S)-5,6,7,8-tetrahydrofolate + H(+). Functionally, attaches a formyl group to the free amino group of methionyl-tRNA(fMet). The formyl group appears to play a dual role in the initiator identity of N-formylmethionyl-tRNA by promoting its recognition by IF2 and preventing the misappropriation of this tRNA by the elongation apparatus. This Helicobacter pylori (strain ATCC 700392 / 26695) (Campylobacter pylori) protein is Methionyl-tRNA formyltransferase.